The chain runs to 604 residues: MRLSQMLFVTLRDDPADAEIPSHKLLLRAGYIRRIGSGLYAYLPLMWRVLQKVSQIVREEMNATGAQECLLPQLQPADLWKESGRWDTYTKAEGIMFSLIDRREQQLGLGPTHEEVITAIARDMIRSYRQLPLHLYQIQTKFRDEIRPRFGLMRGREFIMKDGYSFHTDEASLKETYQDMYKAYSNILRRSGLAFRAVEADSGAIGGSGSTEFMILAEAGEDEVLYTEDGKYAANVEKAVSLPIDAETSRFTTYEKRDTPGTETIEKVCQLLNCSPTQLVKNVLYQTVYDNGKTVLVLVSIRGDQEVNEVKLQNELTKLASEYGAKTIISLNVPNVEAQQAWTTKSLPLGYIAPDIADEYIAANKQIHSKFLRLVDQTAVDLKNFVTGANEAGYHVVSANWDEQFKLPERVVDIRKSRPGDRAIHNPEQTLQSARGIEAGHIFQLGTKYSQAMGATYTNEQGEEKPLLMGCFGVGVSRLAQAAVEQSYDNDGIIWPVAIAPYHAIVTIPNIKDAQQVEVAQKLYTELNQAGIETLLDDRDERAGVKFKDADLIGIPYRIVTGRAIANGKVEVVERATRKSQEIVIDEVTTTLQQWITAAIDVKN.

The protein belongs to the class-II aminoacyl-tRNA synthetase family. ProS type 1 subfamily. Homodimer.

Its subcellular location is the cytoplasm. The catalysed reaction is tRNA(Pro) + L-proline + ATP = L-prolyl-tRNA(Pro) + AMP + diphosphate. Functionally, catalyzes the attachment of proline to tRNA(Pro) in a two-step reaction: proline is first activated by ATP to form Pro-AMP and then transferred to the acceptor end of tRNA(Pro). As ProRS can inadvertently accommodate and process non-cognate amino acids such as alanine and cysteine, to avoid such errors it has two additional distinct editing activities against alanine. One activity is designated as 'pretransfer' editing and involves the tRNA(Pro)-independent hydrolysis of activated Ala-AMP. The other activity is designated 'posttransfer' editing and involves deacylation of mischarged Ala-tRNA(Pro). The misacylated Cys-tRNA(Pro) is not edited by ProRS. This chain is Proline--tRNA ligase, found in Nostoc punctiforme (strain ATCC 29133 / PCC 73102).